Consider the following 151-residue polypeptide: SsrA-binding protein (151 aa).

It belongs to the SmpB family.

Its subcellular location is the cytoplasm. In terms of biological role, required for rescue of stalled ribosomes mediated by trans-translation. Binds to transfer-messenger RNA (tmRNA), required for stable association of tmRNA with ribosomes. tmRNA and SmpB together mimic tRNA shape, replacing the anticodon stem-loop with SmpB. tmRNA is encoded by the ssrA gene; the 2 termini fold to resemble tRNA(Ala) and it encodes a 'tag peptide', a short internal open reading frame. During trans-translation Ala-aminoacylated tmRNA acts like a tRNA, entering the A-site of stalled ribosomes, displacing the stalled mRNA. The ribosome then switches to translate the ORF on the tmRNA; the nascent peptide is terminated with the 'tag peptide' encoded by the tmRNA and targeted for degradation. The ribosome is freed to recommence translation, which seems to be the essential function of trans-translation. The protein is SsrA-binding protein of Campylobacter fetus subsp. fetus (strain 82-40).